The following is a 140-amino-acid chain: Histone H2B (140 aa).

The segment at 1 to 47 (MPPKAQKTPTTGGKAPAGKAPVEKKEAGKKTAAPSGEKKKRTKTRKE) is disordered. Residue lysine 7 is modified to N6-acetyllysine; alternate. Lysine 7 is covalently cross-linked (Glycyl lysine isopeptide (Lys-Gly) (interchain with G-Cter in SUMO); alternate). The residue at position 14 (lysine 14) is an N6-acetyllysine. The residue at position 24 (lysine 24) is an N6-acetyllysine; alternate. A Glycyl lysine isopeptide (Lys-Gly) (interchain with G-Cter in SUMO); alternate cross-link involves residue lysine 24. A Glycyl lysine isopeptide (Lys-Gly) (interchain with G-Cter in SUMO) cross-link involves residue lysine 25. Lysine 134 is covalently cross-linked (Glycyl lysine isopeptide (Lys-Gly) (interchain with G-Cter in ubiquitin)).

Belongs to the histone H2B family. As to quaternary structure, the nucleosome is a histone octamer containing two molecules each of H2A, H2B, H3 and H4 assembled in one H3-H4 heterotetramer and two H2A-H2B heterodimers. The octamer wraps approximately 147 bp of DNA. Post-translationally, monoubiquitinated by BRE1 to form H2BK123ub1. H2BK123ub1 gives a specific tag for epigenetic transcriptional activation and is also prerequisite for H3K4me and H3K79me formation. H2BK123ub1 also modulates the formation of double-strand breaks during meiosis and is a prerequisite for DNA-damage checkpoint activation. In terms of processing, acetylated by GCN5 to form H2BK11ac and H2BK16ac. H2BK16ac can also be formed by ESA1. Acetylation of N-terminal lysines and particularly formation of H2BK11acK16ac has a positive effect on transcription. Sumoylation to form H2BK6su and probably also H2BK16su or H2BK17su, occurs preferentially near the telomeres and represses gene transcription.

It localises to the nucleus. The protein resides in the chromosome. Functionally, core component of nucleosome. Nucleosomes wrap and compact DNA into chromatin, limiting DNA accessibility to the cellular machineries which require DNA as a template. Histones thereby play a central role in transcription regulation, DNA repair, DNA replication and chromosomal stability. DNA accessibility is regulated via a complex set of post-translational modifications of histones, also called histone code, and nucleosome remodeling. This is Histone H2B (HTB1) from Phaeosphaeria nodorum (strain SN15 / ATCC MYA-4574 / FGSC 10173) (Glume blotch fungus).